A 624-amino-acid polypeptide reads, in one-letter code: DNA-directed RNA polymerase subunit gamma (624 aa).

Zn(2+)-binding residues include cysteine 70, cysteine 72, cysteine 85, and cysteine 88. Aspartate 466, aspartate 468, and aspartate 470 together coordinate Mg(2+).

It belongs to the RNA polymerase beta' chain family. RpoC1 subfamily. As to quaternary structure, in cyanobacteria the RNAP catalytic core is composed of 2 alpha, 1 beta, 1 beta', 1 gamma and 1 omega subunit. When a sigma factor is associated with the core the holoenzyme is formed, which can initiate transcription. Mg(2+) is required as a cofactor. The cofactor is Zn(2+).

The enzyme catalyses RNA(n) + a ribonucleoside 5'-triphosphate = RNA(n+1) + diphosphate. DNA-dependent RNA polymerase catalyzes the transcription of DNA into RNA using the four ribonucleoside triphosphates as substrates. This chain is DNA-directed RNA polymerase subunit gamma, found in Synechococcus sp. (strain ATCC 27144 / PCC 6301 / SAUG 1402/1) (Anacystis nidulans).